The chain runs to 446 residues: Probable beta-1,4-xylosyltransferase IRX9L (446 aa).

Residues 1 to 26 (MSRRNAGAMQREGSVKDWEEFDPSPS) form a disordered region. Residues 1-85 (MSRRNAGAMQ…SRSKGMSLKR (85 aa)) lie on the Cytoplasmic side of the membrane. The helical; Signal-anchor for type II membrane protein transmembrane segment at 86–106 (AMLQLLVCFMVGIFIGFTPPF) threads the bilayer. Residues 107–446 (SVDLPGKIAS…RNLDAVVPIT (340 aa)) are Lumenal-facing. Asn185, Asn258, Asn361, and Asn411 each carry an N-linked (GlcNAc...) asparagine glycan.

Belongs to the glycosyltransferase 43 family.

It localises to the golgi apparatus membrane. Functionally, probable beta-1,4-xylosyltransferase involved in xylan biosynthesis in cell walls. This Oryza sativa subsp. japonica (Rice) protein is Probable beta-1,4-xylosyltransferase IRX9L.